The primary structure comprises 250 residues: 2,3-bisphosphoglycerate-dependent phosphoglycerate mutase (250 aa).

Substrate is bound by residues 10–17 (RHGESQWN), 23–24 (TG), R62, 89–92 (ERHY), K100, 116–117 (RR), and 185–186 (GN). H11 functions as the Tele-phosphohistidine intermediate in the catalytic mechanism. E89 functions as the Proton donor/acceptor in the catalytic mechanism.

Belongs to the phosphoglycerate mutase family. BPG-dependent PGAM subfamily. In terms of assembly, homodimer.

It carries out the reaction (2R)-2-phosphoglycerate = (2R)-3-phosphoglycerate. It participates in carbohydrate degradation; glycolysis; pyruvate from D-glyceraldehyde 3-phosphate: step 3/5. Catalyzes the interconversion of 2-phosphoglycerate and 3-phosphoglycerate. The protein is 2,3-bisphosphoglycerate-dependent phosphoglycerate mutase of Shigella dysenteriae serotype 1 (strain Sd197).